Reading from the N-terminus, the 440-residue chain is SET domain-containing protein 4 (440 aa).

A compositionally biased stretch (basic residues) spans 1-16 (MQKGKGRTSRIRRRKL). Residues 1–24 (MQKGKGRTSRIRRRKLCGSSESRG) are disordered. Positions 48–273 (SNLAPACFPG…KHEEVFICYG (226 aa)) constitute an SET domain. Tyrosine 272 is a binding site for S-adenosyl-L-methionine.

This sequence belongs to the class V-like SAM-binding methyltransferase superfamily. SETD4 family. Forms a ternary complex with TBK1 and ZNF268; the interaction with TBK1 is ZNF268-dependent and leads to TBK1 monomethylation.

Its subcellular location is the cytoplasm. It is found in the cytosol. It localises to the nucleus. The enzyme catalyses L-lysyl(4)-[histone H3] + S-adenosyl-L-methionine = N(6)-methyl-L-lysyl(4)-[histone H3] + S-adenosyl-L-homocysteine + H(+). It catalyses the reaction N(6)-methyl-L-lysyl(4)-[histone H3] + S-adenosyl-L-methionine = N(6),N(6)-dimethyl-L-lysyl(4)-[histone H3] + S-adenosyl-L-homocysteine + H(+). It carries out the reaction L-lysyl(20)-[histone H4] + S-adenosyl-L-methionine = N(6)-methyl-L-lysyl(20)-[histone H4] + S-adenosyl-L-homocysteine + H(+). The catalysed reaction is N(6)-methyl-L-lysyl(20)-[histone H4] + S-adenosyl-L-methionine = N(6),N(6)-dimethyl-L-lysyl(20)-[histone H4] + S-adenosyl-L-homocysteine + H(+). The enzyme catalyses N(6),N(6)-dimethyl-L-lysyl(20)-[histone H4] + S-adenosyl-L-methionine = N(6),N(6),N(6)-trimethyl-L-lysyl(20)-[histone H4] + S-adenosyl-L-homocysteine + H(+). It catalyses the reaction L-lysyl-[protein] + S-adenosyl-L-methionine = N(6)-methyl-L-lysyl-[protein] + S-adenosyl-L-homocysteine + H(+). Protein-lysine N-methyltransferase that methylates both histones and non-histone proteins. Via its catalytic activity, regulates many processes, including cell proliferation, cell differentiation, inflammatory response and apoptosis. Regulates the inflammatory response by mediating mono- and dimethylation of 'Lys-4' of histone H3 (H3K4me1 and H3K4me2, respectively), leading to activate the transcription of pro-inflammatory cytokines IL6 and TNF-alpha. Through the catalysis of TBK1 monomethylation, may regulate virus-induced interferon signaling. TBK1 monomethylation enhances its interaction with MAVS, STING and IRF3, hence promoting antiviral interferon signaling. Also involved in the regulation of stem cell quiescence by catalyzing the trimethylation of 'Lys-20' of histone H4 (H4K20me3), thereby promoting heterochromatin formation. In the brain, epigenetically controls quiescence of neural stem cells for sustaining a protected neural stem cell population and maintaining a stem cell reservoir for neurogenesis. Involved in proliferation, migration, paracrine and myogenic differentiation of bone marrow mesenchymal stem cells (BMSCs). Through the catalysis of XRCC5/Ku70 trimethylation, regulates BAX-mediated apoptosis. SETD4-catalyzed XRCC5 methylation results in XRCC5 translocation to the cytoplasm, where it interacts with BAX, sequestering it from the mitochondria, hence preventing BAX-mediated apoptosis. The polypeptide is SET domain-containing protein 4 (Homo sapiens (Human)).